The following is a 188-amino-acid chain: CyanoP (188 aa).

The signal sequence occupies residues 1–23 (MLKKSLSTAVVLVTLLLSFTLTA). C24 carries the N-palmitoyl cysteine lipid modification. A lipid anchor (S-diacylglycerol cysteine) is attached at C24.

This sequence belongs to the PsbP family. CyanoP subfamily. As to quaternary structure, monomer. Present in about 3% of photosystem II (PSII) preparations. Purifies with partially assembled PSII complexes, in addition to a small amount of monomeric and dimeric PSII, and trimeric PSI.

Its subcellular location is the cellular thylakoid membrane. Its function is as follows. Plays a role in the early stages of photosystem II (PSII) assembly; binds to D2 (psbD) and may facilitate its incorporation into PSII. Required for optimal photoautotrophic growth in the absence of Ca(2+) or Cl(-), functions in optimizing PSII water oxidation/O(2) evolving activity. Might be involved in assembly of the oxygen evolving complex. The polypeptide is CyanoP (Synechocystis sp. (strain ATCC 27184 / PCC 6803 / Kazusa)).